The chain runs to 382 residues: Guanylate kinase 1 (382 aa).

The region spanning 128–310 (QKPIVISGPS…CYENLKKLLS (183 aa)) is the Guanylate kinase-like domain. 135–142 (GPSGVGKG) contributes to the ATP binding site. Active-site residues include R168, R261, and R272. ATP-binding residues include N295 and D296.

Belongs to the guanylate kinase family. As to quaternary structure, monomer.

The protein localises to the cytoplasm. The protein resides in the nucleus. It carries out the reaction GMP + ATP = GDP + ADP. Its function is as follows. Essential for recycling GMP and indirectly, cGMP. The polypeptide is Guanylate kinase 1 (GK1) (Oryza sativa subsp. japonica (Rice)).